A 320-amino-acid chain; its full sequence is MKKDLISNHIQLDDSGKLIHLLGLEGLSKQYLIHILDTADSLIDVSGNLKKSKALDDIFVANLFFEPSTRTRNTFEIAAMRSSANVINVDLANSALKKNEDLLNTMRTLKAMQIDMFVIRHKQNGLPHHVVQHLKDVSILNAGDGINAHPTQALLDMLSIRQHKKTFENLSVAIVGDITHSRVAHSDIQALKTLGTTDIRLIAPKVLQYNLAPCSVVKHFDDIEPGLKNCDVVIVLRLQKERMIEADIPNEQEYFDNFGLTPKRLALAKPDAIVMHPGPTNRGVEIDSNVADGNQSIILQQVTNGIAVRMAVMQILVNKS.

Carbamoyl phosphate-binding residues include Arg-70 and Thr-71. Lys-98 serves as a coordination point for L-aspartate. Residues Arg-120, His-149, and Gln-152 each coordinate carbamoyl phosphate. 2 residues coordinate L-aspartate: Arg-182 and Arg-237. Gly-278 and Pro-279 together coordinate carbamoyl phosphate.

It belongs to the aspartate/ornithine carbamoyltransferase superfamily. ATCase family. Heterododecamer (2C3:3R2) of six catalytic PyrB chains organized as two trimers (C3), and six regulatory PyrI chains organized as three dimers (R2).

The catalysed reaction is carbamoyl phosphate + L-aspartate = N-carbamoyl-L-aspartate + phosphate + H(+). Its pathway is pyrimidine metabolism; UMP biosynthesis via de novo pathway; (S)-dihydroorotate from bicarbonate: step 2/3. Catalyzes the condensation of carbamoyl phosphate and aspartate to form carbamoyl aspartate and inorganic phosphate, the committed step in the de novo pyrimidine nucleotide biosynthesis pathway. In Ruthia magnifica subsp. Calyptogena magnifica, this protein is Aspartate carbamoyltransferase catalytic subunit.